Reading from the N-terminus, the 42-residue chain is Omega-theraphotoxin-Asp3a (42 aa).

3 cysteine pairs are disulfide-bonded: cysteine 1–cysteine 16, cysteine 8–cysteine 21, and cysteine 15–cysteine 30.

The protein belongs to the neurotoxin 14 (magi-1) family. 08 (Ltx-4) subfamily. In terms of tissue distribution, expressed by the venom gland.

It is found in the secreted. Inhibits voltage-gated calcium channels (Cav) in rat cerebellar granule cells. In Aphonopelma sp. (American tarantula), this protein is Omega-theraphotoxin-Asp3a.